The sequence spans 318 residues: Porphobilinogen deaminase (318 aa).

At Cys-241 the chain carries S-(dipyrrolylmethanemethyl)cysteine.

This sequence belongs to the HMBS family. In terms of assembly, monomer. It depends on dipyrromethane as a cofactor.

It catalyses the reaction 4 porphobilinogen + H2O = hydroxymethylbilane + 4 NH4(+). The protein operates within porphyrin-containing compound metabolism; protoporphyrin-IX biosynthesis; coproporphyrinogen-III from 5-aminolevulinate: step 2/4. In terms of biological role, tetrapolymerization of the monopyrrole PBG into the hydroxymethylbilane pre-uroporphyrinogen in several discrete steps. The chain is Porphobilinogen deaminase from Geotalea daltonii (strain DSM 22248 / JCM 15807 / FRC-32) (Geobacter daltonii).